The chain runs to 155 residues: MQQLSKRRLSALFVTAFLPVTAFASECSSVRFAEVGWTDITVTTALASEVLEALGYEPRVDTVSVPIAYAGIRNNDFDVFLGNWMPSMASISDPYIERGEVERLVANLEGAKYTLAVPQYVYDAGVTSVNDLAEHADQFEQRIHGIEAGNDGNEL.

A signal peptide spans 1-24 (MQQLSKRRLSALFVTAFLPVTAFA).

This is an uncharacterized protein from Chromohalobacter salexigens (strain ATCC BAA-138 / DSM 3043 / CIP 106854 / NCIMB 13768 / 1H11).